Here is a 150-residue protein sequence, read N- to C-terminus: Large ribosomal subunit protein bL9 (150 aa).

This sequence belongs to the bacterial ribosomal protein bL9 family.

Binds to the 23S rRNA. This Ralstonia nicotianae (strain ATCC BAA-1114 / GMI1000) (Ralstonia solanacearum) protein is Large ribosomal subunit protein bL9.